The following is a 215-amino-acid chain: Large ribosomal subunit protein uL4 (215 aa).

Positions 46 to 72 (TAKSKNRAEVSGGGRKPWAQKGGGRAR) are disordered. The span at 56–71 (SGGGRKPWAQKGGGRA) shows a compositional bias: gly residues.

This sequence belongs to the universal ribosomal protein uL4 family. In terms of assembly, part of the 50S ribosomal subunit.

In terms of biological role, one of the primary rRNA binding proteins, this protein initially binds near the 5'-end of the 23S rRNA. It is important during the early stages of 50S assembly. It makes multiple contacts with different domains of the 23S rRNA in the assembled 50S subunit and ribosome. Functionally, forms part of the polypeptide exit tunnel. The protein is Large ribosomal subunit protein uL4 of Helicobacter pylori (strain Shi470).